Reading from the N-terminus, the 173-residue chain is uncharacterized protein (173 aa).

This is an uncharacterized protein from Haemophilus influenzae (strain ATCC 51907 / DSM 11121 / KW20 / Rd).